Consider the following 161-residue polypeptide: MFSNKKYIGLIDKYCEKKILDDSSTIKICYILIGILIGTNMITLIYNFIFWENYITCNQKDKTFYCPKDWVGYNNVCYYFGNDEKNYNNASNYCKQLNSTLTNNNTNLVNLTKTLNLTKTYNHESNYWVNYSLIKNESVLLRNSGYYKKQKHVSLLYICSK.

The Cytoplasmic portion of the chain corresponds to 1-30 (MFSNKKYIGLIDKYCEKKILDDSSTIKICY). A helical membrane pass occupies residues 31–51 (ILIGILIGTNMITLIYNFIFW). Residues 52-161 (ENYITCNQKD…HVSLLYICSK (110 aa)) lie on the Extracellular side of the membrane. An intrachain disulfide couples Cys-66 to Cys-77. Residues 66-160 (CPKDWVGYNN…KHVSLLYICS (95 aa)) are lectin-like. Residues Asn-89, Asn-98, Asn-104, Asn-110, Asn-116, Asn-130, and Asn-136 are each glycosylated (N-linked (GlcNAc...) asparagine; by host). Cys-94 and Cys-159 are disulfide-bonded.

The protein belongs to the asfivirus lectin-like protein family. In terms of assembly, homodimer.

The protein resides in the host endoplasmic reticulum membrane. Its function is as follows. Down-regulates MHC-I expression by impairing the appropriate configuration or presentation into the plasma membrane of the latter. Participates in viral hemadsorption, which may help viral spread. Reduces the transactivating activity of host TP53, thus inhibiting apoptosis. Non-essential for virus growth in swine macrophage cell cultures. The chain is Lectin-like protein EP153R from African swine fever virus (isolate Tick/Malawi/Lil 20-1/1983) (ASFV).